A 993-amino-acid chain; its full sequence is UPF0182 protein MAV_4137 (993 aa).

A run of 7 helical transmembrane segments spans residues 18–38, 63–83, 113–133, 175–195, 210–230, 254–274, and 287–307; these read ILIL…RLID, FVVF…GLAV, LVSI…AQSY, FVAV…FGGI, IQLV…YWLD, AVLP…AAVF, and IGLV…PLIV. The segment at 903-941 is disordered; it reads NIQPTEGGAPAASPPANAPAPAVTPGSAPPVAAPPVPDG. The span at 929 to 939 shows a compositional bias: pro residues; sequence SAPPVAAPPVP.

It belongs to the UPF0182 family.

The protein localises to the cell membrane. This chain is UPF0182 protein MAV_4137, found in Mycobacterium avium (strain 104).